The sequence spans 215 residues: 3-isopropylmalate dehydratase small subunit (215 aa).

Belongs to the LeuD family. LeuD type 1 subfamily. Heterodimer of LeuC and LeuD.

The enzyme catalyses (2R,3S)-3-isopropylmalate = (2S)-2-isopropylmalate. Its pathway is amino-acid biosynthesis; L-leucine biosynthesis; L-leucine from 3-methyl-2-oxobutanoate: step 2/4. Its function is as follows. Catalyzes the isomerization between 2-isopropylmalate and 3-isopropylmalate, via the formation of 2-isopropylmaleate. The sequence is that of 3-isopropylmalate dehydratase small subunit from Hahella chejuensis (strain KCTC 2396).